Consider the following 200-residue polypeptide: MLKYPDYISKLISFLKKLPGIGFKSAEKIAFELLEWDPSQIEAMAQALQEFSTSHATCSNCFCLKISQTSPCNFCSESRDSSSLCIVATPKDVFALEKSKIFKGHYFVLGNLLSPITGKHLSLEKLAILKQRIEACSPKEMIIALDATLEGDATALFLKQEFSYLPIKISRLALGMPVGLSFDFVDANTLARAFSGRNCF.

The C4-type zinc-finger motif lies at 58-75 (CSNCFCLKISQTSPCNFC). Residues 82–177 (SSLCIVATPK…KISRLALGMP (96 aa)) enclose the Toprim domain.

Belongs to the RecR family.

Its function is as follows. May play a role in DNA repair. It seems to be involved in an RecBC-independent recombinational process of DNA repair. It may act with RecF and RecO. The protein is Recombination protein RecR of Chlamydia trachomatis serovar D (strain ATCC VR-885 / DSM 19411 / UW-3/Cx).